A 353-amino-acid polypeptide reads, in one-letter code: Photosystem II protein D1 (353 aa).

T2 bears the N-acetylthreonine mark. T2 bears the Phosphothreonine mark. 3 helical membrane-spanning segments follow: residues 29-46, 118-133, and 142-156; these read YIGW…TATS, HFLL…EWEL, and WIAV…AATA. H118 provides a ligand contact to chlorophyll a. Y126 is a binding site for pheophytin a. 2 residues coordinate [CaMn4O5] cluster: D170 and E189. A helical transmembrane segment spans residues 197–218; that stretch reads FHMLGVAGVFGGSLFSAMHGSL. H198 contacts chlorophyll a. A quinone contacts are provided by residues H215 and 264–265; that span reads SF. A Fe cation-binding site is contributed by H215. Position 272 (H272) interacts with Fe cation. A helical transmembrane segment spans residues 274–288; that stretch reads FLAAWPVVGIWFTAL. Positions 332, 333, 342, and 344 each coordinate [CaMn4O5] cluster. The propeptide occupies 345 to 353; that stretch reads SVELDSIDG.

Belongs to the reaction center PufL/M/PsbA/D family. As to quaternary structure, PSII is composed of 1 copy each of membrane proteins PsbA, PsbB, PsbC, PsbD, PsbE, PsbF, PsbH, PsbI, PsbJ, PsbK, PsbL, PsbM, PsbT, PsbX, PsbY, PsbZ, Psb30/Ycf12, at least 3 peripheral proteins of the oxygen-evolving complex and a large number of cofactors. It forms dimeric complexes. The cofactor is The D1/D2 heterodimer binds P680, chlorophylls that are the primary electron donor of PSII, and subsequent electron acceptors. It shares a non-heme iron and each subunit binds pheophytin, quinone, additional chlorophylls, carotenoids and lipids. D1 provides most of the ligands for the Mn4-Ca-O5 cluster of the oxygen-evolving complex (OEC). There is also a Cl(-1) ion associated with D1 and D2, which is required for oxygen evolution. The PSII complex binds additional chlorophylls, carotenoids and specific lipids.. In terms of processing, tyr-161 forms a radical intermediate that is referred to as redox-active TyrZ, YZ or Y-Z. C-terminally processed by CTPA; processing is essential to allow assembly of the oxygen-evolving complex and thus photosynthetic growth.

The protein localises to the plastid. The protein resides in the chloroplast thylakoid membrane. The enzyme catalyses 2 a plastoquinone + 4 hnu + 2 H2O = 2 a plastoquinol + O2. Functionally, photosystem II (PSII) is a light-driven water:plastoquinone oxidoreductase that uses light energy to abstract electrons from H(2)O, generating O(2) and a proton gradient subsequently used for ATP formation. It consists of a core antenna complex that captures photons, and an electron transfer chain that converts photonic excitation into a charge separation. The D1/D2 (PsbA/PsbD) reaction center heterodimer binds P680, the primary electron donor of PSII as well as several subsequent electron acceptors. This is Photosystem II protein D1 from Gnetum parvifolium (Small-leaved jointfir).